A 478-amino-acid chain; its full sequence is tRNA (adenine(58)-N(1))-methyltransferase non-catalytic subunit TRM6 (478 aa).

The interval 456–478 (SENATAADSSEKLAEHGAKKQKI) is disordered. The span at 464-478 (SSEKLAEHGAKKQKI) shows a compositional bias: basic and acidic residues.

It belongs to the TRM6/GCD10 family. In terms of assembly, heterotetramer; composed of two copies of TRM6/GCD10 and two copies of TRM61/GCD14.

It localises to the nucleus. Functionally, substrate-binding subunit of tRNA (adenine-N(1)-)-methyltransferase, which catalyzes the formation of N(1)-methyladenine at position 58 (m1A58) in initiator methionyl-tRNA. Also required for repression of GCN4 mRNA translation by the upstream open reading frames (uORFs) under conditions of amino acid sufficiency. The chain is tRNA (adenine(58)-N(1))-methyltransferase non-catalytic subunit TRM6 (GCD10) from Saccharomyces cerevisiae (strain ATCC 204508 / S288c) (Baker's yeast).